Reading from the N-terminus, the 170-residue chain is uncharacterized protein (170 aa).

This is an uncharacterized protein from Acidithiobacillus ferrooxidans (Thiobacillus ferrooxidans).